An 89-amino-acid chain; its full sequence is Small ribosomal subunit protein uS17 (89 aa).

This sequence belongs to the universal ribosomal protein uS17 family. As to quaternary structure, part of the 30S ribosomal subunit.

Its function is as follows. One of the primary rRNA binding proteins, it binds specifically to the 5'-end of 16S ribosomal RNA. This chain is Small ribosomal subunit protein uS17, found in Polaromonas naphthalenivorans (strain CJ2).